We begin with the raw amino-acid sequence, 698 residues long: Nitric oxide-associated protein 1 (698 aa).

The interval 42–66 is disordered; the sequence is FQHSSSLGRELPYDPVDTEGFGEGG. Tyrosine 77 carries the post-translational modification Phosphotyrosine. 2 disordered regions span residues 80–134 and 279–306; these read DPEP…DPAL and LAPGHQGPQRPVKDEPQDGENPNPPNWS. The segment covering 102 to 126 has biased composition (basic and acidic residues); it reads ERQRQQRREERRQQNLRARSREHPV. The CP-type G domain occupies 202 to 503; the sequence is LELVSAALRR…FYDTPGITKE (302 aa).

It belongs to the TRAFAC class YlqF/YawG GTPase family. NOA1 subfamily. In terms of assembly, homodimer or multimer. Interacts with mitochondrial complex I, DAP3, MRPL12 and MRPS27.

It is found in the mitochondrion inner membrane. Functionally, involved in regulation of mitochondrial protein translation and respiration. Plays a role in mitochondria-mediated cell death. May act as a scaffolding protein or stabilizer of respiratory chain supercomplexes. Binds GTP. In Homo sapiens (Human), this protein is Nitric oxide-associated protein 1 (NOA1).